Consider the following 225-residue polypeptide: Urease accessory protein UreE (225 aa).

2 stretches are compositionally biased toward basic and acidic residues: residues 189 to 202 and 212 to 225; these read HSHDFMGHSHEHEG and NSHDNEHDEHHSRR. Residues 189 to 225 are disordered; it reads HSHDFMGHSHEHEGHRHVHNHAGNSHDNEHDEHHSRR.

This sequence belongs to the UreE family.

The protein localises to the cytoplasm. Functionally, involved in urease metallocenter assembly. Binds nickel. Probably functions as a nickel donor during metallocenter assembly. The protein is Urease accessory protein UreE of Edwardsiella ictaluri.